Consider the following 263-residue polypeptide: Putative hydro-lyase GK2103 (263 aa).

The protein belongs to the D-glutamate cyclase family.

The sequence is that of Putative hydro-lyase GK2103 from Geobacillus kaustophilus (strain HTA426).